The sequence spans 583 residues: Capsid vertex component 2 (583 aa).

The interaction with major capsid protein/MCP stretch occupies residues 1–49 (MANFIWDARILTGDGMEMFPADVKNFIAPPWPIEFWKEPVFTSNRANME).

This sequence belongs to the herpesviridae CVC2 protein family. As to quaternary structure, heterodimerizes with CVC1. Interacts with major capsid protein/MCP and triplex capsid protein 1/TRX1 at the pentamer vertices. Interacts with the large tegument protein/LTP.

The protein localises to the virion. The protein resides in the host nucleus. Functionally, capsid vertex-specific component that plays a role during viral DNA encapsidation, assuring correct genome cleavage and presumably stabilizing capsids that contain full-length viral genomes. Participates in the interaction between the capsid and the tegument through interaction with the large tegument protein/LTP. The protein is Capsid vertex component 2 of Gallus gallus (Chicken).